Reading from the N-terminus, the 197-residue chain is Ribonuclease HII (197 aa).

The RNase H type-2 domain maps to 9-197 (KLIAGVDEVG…APVKKALEQF (189 aa)). Residues D15, E16, and D107 each contribute to the a divalent metal cation site.

It belongs to the RNase HII family. The cofactor is Mn(2+). Requires Mg(2+) as cofactor.

The protein localises to the cytoplasm. The enzyme catalyses Endonucleolytic cleavage to 5'-phosphomonoester.. Functionally, endonuclease that specifically degrades the RNA of RNA-DNA hybrids. The chain is Ribonuclease HII (rnhB) from Haemophilus influenzae (strain ATCC 51907 / DSM 11121 / KW20 / Rd).